Consider the following 635-residue polypeptide: Threonine--tRNA ligase (635 aa).

The TGS domain occupies 1–61; it reads MVSIRLPDGS…DRDASLAIVT (61 aa). The segment at 242 to 533 is catalytic; sequence DHRKLGKQLD…LIEHHAGAMP (292 aa). Residues Cys333, His384, and His510 each contribute to the Zn(2+) site.

It belongs to the class-II aminoacyl-tRNA synthetase family. As to quaternary structure, homodimer. Zn(2+) serves as cofactor.

It localises to the cytoplasm. It carries out the reaction tRNA(Thr) + L-threonine + ATP = L-threonyl-tRNA(Thr) + AMP + diphosphate + H(+). Catalyzes the attachment of threonine to tRNA(Thr) in a two-step reaction: L-threonine is first activated by ATP to form Thr-AMP and then transferred to the acceptor end of tRNA(Thr). Also edits incorrectly charged L-seryl-tRNA(Thr). This chain is Threonine--tRNA ligase, found in Burkholderia cenocepacia (strain ATCC BAA-245 / DSM 16553 / LMG 16656 / NCTC 13227 / J2315 / CF5610) (Burkholderia cepacia (strain J2315)).